The primary structure comprises 406 residues: RNA exonuclease 4 (406 aa).

Over residues 1–10 (MAPELSSNWK) the composition is skewed to polar residues. Disordered stretches follow at residues 1 to 108 (MAPE…TLPS) and 156 to 181 (AGLTLPGHSSSSPKSNKNGLPLPTDL). Low complexity-rich tracts occupy residues 54 to 64 (SQQQQQASNPS), 72 to 82 (SQTQSQPSSQK), and 94 to 108 (SKPTTSSSPNSTLPS). The segment covering 162 to 173 (GHSSSSPKSNKN) has biased composition (polar residues). The Exonuclease domain maps to 216 to 367 (YLSIDCEMVG…EDARVAMLLF (152 aa)). Over residues 377–387 (ENSNRYEEGQA) the composition is skewed to basic and acidic residues. A disordered region spans residues 377 to 406 (ENSNRYEEGQAKKGGNGGGGGGGKKKKGKK). Residues 388 to 398 (KKGGNGGGGGG) show a composition bias toward gly residues.

Belongs to the REXO4 family.

Its subcellular location is the nucleus. Functionally, exoribonuclease involved in ribosome biosynthesis. Involved in the processing of ITS1, the internal transcribed spacer localized between the 18S and 5.8S rRNAs. This Neurospora crassa (strain ATCC 24698 / 74-OR23-1A / CBS 708.71 / DSM 1257 / FGSC 987) protein is RNA exonuclease 4 (rex-4).